Reading from the N-terminus, the 1096-residue chain is Inactive phospholipase C-like protein 1 (1096 aa).

The tract at residues 1-101 is disordered; that stretch reads MAEGAASREA…KKTVSFSSMP (101 aa). Residue serine 48 is modified to Phosphoserine. Over residues 49–60 the composition is skewed to low complexity; that stretch reads GVALPGAAGVPA. Position 78 is a phosphoserine (serine 78). Positions 83-222 are interaction with PPP1C; it reads PSNQKCGGRK…NIWVSGLRYL (140 aa). Phosphothreonine is present on threonine 94. Phosphothreonine; by PKA is present on threonine 94. Serine 96 is subject to Phosphoserine; by PKA. The PH domain maps to 114-224; that stretch reads SFMQAGCELK…WVSGLRYLVS (111 aa). The PI-PLC X-box domain maps to 399-543; sequence QDMTQPLSHY…LKNMIIVKGK (145 aa). The segment at 544 to 568 is interaction with GABA A beta subunit; the sequence is KLPSESDLLEGEVTDEDEEAEMSRR. The segment covering 550-563 has biased composition (acidic residues); that stretch reads DLLEGEVTDEDEEA. Residues 550 to 569 form a disordered region; sequence DLLEGEVTDEDEEAEMSRRM. Threonine 557 carries the phosphothreonine modification. Serine 570 carries the post-translational modification Phosphoserine. In terms of domain architecture, PI-PLC Y-box spans 586–702; the sequence is LSDLVSICKS…GYVLRPSIMR (117 aa). The 130-residue stretch at 702 to 831 folds into the C2 domain; sequence RDEVSYFSAN…PGYRHVPLRS (130 aa). A coiled-coil region spans residues 1040-1060; that stretch reads DLLKNAKNEAVENIKQIQLAC. The segment at 1067 to 1096 is disordered; that stretch reads KGPGGGSEAKGKRSLEAIEEKESSEENGKL. A compositionally biased stretch (basic and acidic residues) spans 1075–1096; the sequence is AKGKRSLEAIEEKESSEENGKL. A Phosphoserine modification is found at serine 1080.

As to quaternary structure, interacts with PPP2CA, Ins(1,4,5)P3, Ins(1,4,5,6)P4 GABARAP, GABA receptor beta subunits, GABA receptor gamma-2 subunits and PPP1C. May form a ternary complex with GABA receptor beta subunit and GABARAP. The formation of a ternary complex with GABA receptor beta subunit and GABARAP could be the key step for facilitating the association of GABARAP with the GABA receptor gamma-2 subunit and to allow it to be transported at the right destination. Post-translationally, phosphorylated by the catalytic subunit of PKA. Phosphorylation of Thr-94 resulted in dissociation of PPP1C from PRIP1.

It is found in the cytoplasm. Functionally, involved in an inositol phospholipid-based intracellular signaling cascade. Shows no PLC activity to phosphatidylinositol 4,5-bisphosphate and phosphatidylinositol. Component in the phospho-dependent endocytosis process of GABA A receptor. Acts as an inhibitor of PPP1C. Involved in the assembly and/or the trafficking of gamma-2 subunit-containing GABA A receptors. This Mus musculus (Mouse) protein is Inactive phospholipase C-like protein 1 (Plcl1).